An 894-amino-acid chain; its full sequence is Bifunctional enzyme RhaA/RhaB (894 aa).

A rhamnulokinase region spans residues 1-465 (MGEYRLAVDI…TAFPVTYFLP (465 aa)). An L-rhamnose isomerase region spans residues 466-894 (QRSESHVSSR…KRESEKAKQR (429 aa)). Mn(2+) is bound by residues histidine 730, aspartate 762, and aspartate 764.

This sequence in the N-terminal section; belongs to the rhamnulokinase family. The protein in the C-terminal section; belongs to the rhamnose isomerase family. Mn(2+) serves as cofactor.

Its subcellular location is the cytoplasm. It carries out the reaction L-rhamnulose + ATP = L-rhamnulose 1-phosphate + ADP + H(+). The catalysed reaction is L-rhamnopyranose = L-rhamnulose. The protein operates within carbohydrate degradation; L-rhamnose degradation; glycerone phosphate from L-rhamnose: step 1/3. Its pathway is carbohydrate degradation; L-rhamnose degradation; glycerone phosphate from L-rhamnose: step 2/3. This chain is Bifunctional enzyme RhaA/RhaB (rhaAB), found in Shouchella clausii (strain KSM-K16) (Alkalihalobacillus clausii).